Reading from the N-terminus, the 176-residue chain is Large ribosomal subunit protein uL6 (176 aa).

Positions 151-170 are enriched in basic and acidic residues; the sequence is RPPEPYKGKGVRYADEQVRR. The segment at 151–176 is disordered; sequence RPPEPYKGKGVRYADEQVRRKEAKKK.

This sequence belongs to the universal ribosomal protein uL6 family. Part of the 50S ribosomal subunit.

Functionally, this protein binds to the 23S rRNA, and is important in its secondary structure. It is located near the subunit interface in the base of the L7/L12 stalk, and near the tRNA binding site of the peptidyltransferase center. In Shewanella loihica (strain ATCC BAA-1088 / PV-4), this protein is Large ribosomal subunit protein uL6.